Reading from the N-terminus, the 1721-residue chain is Intersectin-1 (1721 aa).

The EH 1 domain maps to 21–109 (ERAKHDQQFH…PVMKQQPVAI (89 aa)). Residues 53–88 (LPQPVLAQIWALADMNNDGRMDQVEFSIAMKLIKLK) form the EF-hand 1 domain. Ca(2+)-binding residues include aspartate 66, asparagine 68, aspartate 70, arginine 72, and glutamate 77. Residue serine 203 is modified to Phosphoserine. The region spanning 221 to 310 (SRLKYRQLFN…PEYIPPSFRR (90 aa)) is the EH 2 domain. Positions 254 to 289 (LPQAQLASIWNLSDIDQDGKLTAEEFILAMHLIDVA) constitute an EF-hand 2 domain. Residues aspartate 267, aspartate 269, aspartate 271, lysine 273, and glutamate 278 each contribute to the Ca(2+) site. Residue serine 318 is modified to Phosphoserine. Disordered regions lie at residues 322–348 (STSV…KLPV) and 650–701 (QRRA…KQEA). The interval 326–702 (DQRLPEEPVL…GEEKGKQEAQ (377 aa)) is KLERQ. A coiled-coil region spans residues 355 to 659 (RENFERGNLE…QRRAQERDKQ (305 aa)). Serine 687 carries the post-translational modification Phosphoserine. The region spanning 740–806 (VKVVYYRALY…PANYAEKIPE (67 aa)) is the SH3 1 domain. The segment at 836–868 (LAVTSSEPSTTPNNWADFSSTWPTSTNEKPETD) is disordered. Polar residues predominate over residues 838–862 (VTSSEPSTTPNNWADFSSTWPTSTN). Residue threonine 897 is modified to Phosphothreonine. Phosphoserine occurs at positions 901, 902, and 904. In terms of domain architecture, SH3 2 spans 913–971 (VEGLQAQALYPWRAKKDNHLNFNKNDVITVLEQQDMWWFGEVQGQKGWFPKSYVKLISG). Phosphoserine is present on residues serine 978, serine 986, and serine 995. SH3 domains follow at residues 1002–1060 (VSGE…LKDS) and 1074–1138 (KKPE…LLSP). Residues 1074-1138 (KKPEIAQVIA…PANYVKLLSP (65 aa)) are required for interaction with FCHSD2. A Bipartite nuclear localization signal; in isoform 2 motif is present at residues 1104–1127 (RKKNPGGWWEGELQARGKKRQIGW). Position 1137 is a phosphoserine (serine 1137). The residue at position 1144 (threonine 1144) is a Phosphothreonine. Residues 1155-1214 (AAVCQVIGMYDYTAQNDDELAFNKGQIINVLNKEDPDWWKGEVNGQVGLFPSNYVKLTTD) enclose the SH3 5 domain. The DH domain occupies 1237 to 1423 (KRQGYIHELI…EELCSQVNEG (187 aa)). The region spanning 1462–1571 (KFLHSGKLYK…WVQKIKAASE (110 aa)) is the PH domain. The C2 domain occupies 1579–1695 (KKREKAYLVR…KKDQGSKGPV (117 aa)). The residue at position 1645 (serine 1645) is a Phosphoserine. Aspartate 1667, serine 1670, and aspartate 1673 together coordinate Ca(2+).

In terms of assembly, interacts (via DH domain) with CDC42. Interacts (via SH3 domain 1) with WASL. Interacts with dynamin, SNAP25 and SNAP23. Interacts with clathrin-associated proteins and other components of the endocytic machinery, such as SPIN90, EPS15, EPN1, EPN2, STON2, FCHO1, FCHO2 and DAB2. Interacts (via SH3 domains) with REPS1 and SGIP1. Interacts with ARHGAP31. Interacts with ADAM15. Interacts with PRRT2. Interacts (via SH3 domain 4) with FCHSD2 (via SH3 domain 2). Interacts (via SH3 domain 1) with DENND2B. Interacts (via SH3 domains) with CBL. Isoform 2: Interacts with CBL and DNM1. Isoform 2: Interacts with LMNA. Isoform 2: Interacts with importin subunit KPNA1; this is likely to mediate its import into the nucleus. Interacts with DNM2. As to quaternary structure, (Microbial infection) Interacts with vaccinia virus protein A36. The cofactor is Ca(2+). In terms of tissue distribution, isoform 1 is expressed almost exclusively in the brain. Isoform 2 is detected in brain, spleen, lung, liver, heart, skeletal muscle and kidney. Isoform 5 is primarily expressed in brain, spleen, lung and kidney (at protein level). Isoform 1 and isoform 2 are detected in brain. Isoform 2 is ubiquitous in adult and fetal tissues with high expression in skeletal muscle, heart, spleen, ovary, testis and all fetal tissues tested and low expression in thymus, blood, lung, liver and pancreas. Isoform 1 is expressed almost exclusively in the brain, in all brain regions. Not expressed in the spinal cord.

The protein resides in the endomembrane system. Its subcellular location is the synapse. It localises to the synaptosome. The protein localises to the cell projection. It is found in the lamellipodium. The protein resides in the cell membrane. Its subcellular location is the membrane. It localises to the clathrin-coated pit. The protein localises to the recycling endosome. It is found in the endosome. The protein resides in the cytoplasmic vesicle. Its subcellular location is the cytoplasm. It localises to the nucleus envelope. Its function is as follows. Adapter protein that provides a link between the endocytic membrane traffic and the actin assembly machinery. Acts as a guanine nucleotide exchange factor (GEF) for CDC42, and thereby stimulates actin nucleation mediated by WASL and the ARP2/3 complex. Plays a role in the assembly and maturation of clathrin-coated vesicles. Recruits FCHSD2 to clathrin-coated pits. Involved in endocytosis of activated EGFR, and probably also other growth factor receptors. Involved in endocytosis of integrin beta-1 (ITGB1) and transferrin receptor (TFR); internalization of ITGB1 as DAB2-dependent cargo but not TFR may involve association with DAB2. Promotes ubiquitination and subsequent degradation of EGFR, and thereby contributes to the down-regulation of EGFR-dependent signaling pathways. In chromaffin cells, required for normal exocytosis of catecholamines. Required for rapid replenishment of release-ready synaptic vesicles at presynaptic active zones. Inhibits ARHGAP31 activity toward RAC1. In terms of biological role, plays a role in synaptic vesicle endocytosis in brain neurons. The chain is Intersectin-1 from Homo sapiens (Human).